The sequence spans 78 residues: Large ribosomal subunit protein bL28 (78 aa).

Belongs to the bacterial ribosomal protein bL28 family.

The polypeptide is Large ribosomal subunit protein bL28 (Corynebacterium aurimucosum (strain ATCC 700975 / DSM 44827 / CIP 107346 / CN-1) (Corynebacterium nigricans)).